Consider the following 112-residue polypeptide: 2Fe-2S ferredoxin (112 aa).

The 2Fe-2S ferredoxin-type domain maps to 5–107; it reads IKVTFIINDG…GIKVRLPSAT (103 aa). Residues C42, C48, C51, and C88 each contribute to the [2Fe-2S] cluster site.

It belongs to the adrenodoxin/putidaredoxin family. [2Fe-2S] cluster is required as a cofactor.

In terms of biological role, ferredoxin are iron-sulfur proteins that transfer electrons in a wide variety of metabolic reactions. The polypeptide is 2Fe-2S ferredoxin (fdxB) (Rickettsia montanensis).